A 399-amino-acid chain; its full sequence is F-box/kelch-repeat protein At5g48980 (399 aa).

Polar residues predominate over residues 1–11 (MADSQRLSTAS). Residues 1–29 (MADSQRLSTASGVKDGQPPWKKKKLSNDT) are disordered. Residues 29 to 75 (TTSNPSLPYDVILIILARVSRSYYTNLSLVSKSFRSILTSPELYKTR) form the F-box domain. The stretch at 199 to 248 (IVYLPGSFESPDSLNCVEVYNTMTQTWKPVPPEKRMFKLENLEKKIYYKS) is one Kelch repeat.

In Arabidopsis thaliana (Mouse-ear cress), this protein is F-box/kelch-repeat protein At5g48980.